The chain runs to 269 residues: MSEQMVKEKPERAVIVPKQNHVLEVKDLSIYYGNKQAVHHVNMDIEKNAVTALIGPSGCGKSTFLRNINRMNDLIPSARAEGEILYEGLNILGGNINVVSLRREIGMVFQKPNPFPKSIYANITHALKYAGERNKAVLDEIVEESLTKAALWDEVKDRLHSSALSLSGGQQQRLCIARTLAMKPAVLLLDEPASALDPISNAKIEELITGLKREYSIIIVTHNMQQALRVSDRTAFFLNGELVEYGQTEQIFTSPKKQKTEDYINGKFG.

The ABC transporter domain maps to 23–264 (LEVKDLSIYY…PKKQKTEDYI (242 aa)). 55-62 (GPSGCGKS) serves as a coordination point for ATP.

This sequence belongs to the ABC transporter superfamily. Phosphate importer (TC 3.A.1.7) family. In terms of assembly, the complex is composed of two ATP-binding proteins (PstB), two transmembrane proteins (PstC and PstA) and a solute-binding protein (PstS).

Its subcellular location is the cell membrane. It catalyses the reaction phosphate(out) + ATP + H2O = ADP + 2 phosphate(in) + H(+). Functionally, part of the ABC transporter complex PstSACB involved in phosphate import. Responsible for energy coupling to the transport system. The protein is Phosphate import ATP-binding protein PstB 2 of Bacillus subtilis (strain 168).